A 179-amino-acid polypeptide reads, in one-letter code: uncharacterized protein (179 aa).

Composition is skewed to polar residues over residues 1 to 37 (PLGA…TNPG) and 60 to 70 (IPTQSTTTFRS). Disordered stretches follow at residues 1-41 (PLGA…PSAK) and 60-82 (IPTQ…PGRR).

Component of the acid-soluble and acid-insoluble organic matrix of calcified shell layers (at protein level).

It is found in the secreted. This is an uncharacterized protein from Haliotis asinina (Donkey's ear abalone).